Reading from the N-terminus, the 186-residue chain is Translation initiation factor IF-3 (186 aa).

It belongs to the IF-3 family. Monomer.

Its subcellular location is the cytoplasm. Its function is as follows. IF-3 binds to the 30S ribosomal subunit and shifts the equilibrium between 70S ribosomes and their 50S and 30S subunits in favor of the free subunits, thus enhancing the availability of 30S subunits on which protein synthesis initiation begins. The polypeptide is Translation initiation factor IF-3 (Chlamydia caviae (strain ATCC VR-813 / DSM 19441 / 03DC25 / GPIC) (Chlamydophila caviae)).